Here is a 418-residue protein sequence, read N- to C-terminus: Glutamyl-tRNA reductase (418 aa).

Residues 49-52 (TCNR), Ser-109, 114-116 (EPQ), and Gln-120 contribute to the substrate site. Cys-50 serves as the catalytic Nucleophile. 189–194 (GAGETI) is an NADP(+) binding site.

It belongs to the glutamyl-tRNA reductase family. Homodimer.

The enzyme catalyses (S)-4-amino-5-oxopentanoate + tRNA(Glu) + NADP(+) = L-glutamyl-tRNA(Glu) + NADPH + H(+). The protein operates within porphyrin-containing compound metabolism; protoporphyrin-IX biosynthesis; 5-aminolevulinate from L-glutamyl-tRNA(Glu): step 1/2. Functionally, catalyzes the NADPH-dependent reduction of glutamyl-tRNA(Glu) to glutamate 1-semialdehyde (GSA). This Escherichia coli O6:K15:H31 (strain 536 / UPEC) protein is Glutamyl-tRNA reductase.